Here is an 873-residue protein sequence, read N- to C-terminus: Actin-related protein 8 (873 aa).

A disordered region spans residues 108-129; it reads DEQVKPTSSTSSTSTTEEVEIK. The segment covering 114–123 has biased composition (low complexity); the sequence is TSSTSSTSTT. Residue 368-371 coordinates ATP; sequence DLGH. Residues 596 to 650 are compositionally biased toward low complexity; sequence NNNNNNNNSSSSSNNNNNNNNSGSNSNINSYNNNNNNNNNNNNNNNNNNNNSFNN. Residues 596–701 are disordered; sequence NNNNNNNNSS…TSSPTKKLKI (106 aa). Polar residues predominate over residues 651–668; that stretch reads VTIVTSTLNSNSTVPSTL. Residues 669–696 show a composition bias toward low complexity; it reads NSNSTVPSISNSNSTVPSTSTSTTSSPT. Residues 762-804 are a coiled coil; sequence FKQLEQQYQAQQLQFQQQLQQQQQQQQQLQQQLQNSTNSATTT.

Belongs to the actin family. ARP8 subfamily. In terms of assembly, component of the chromatin remodeling INO80 complex. Exists as monomers and dimers, but the dimer is most probably the biologically relevant form required for stable interactions with histones that exploits the twofold symmetry of the nucleosome core.

Its subcellular location is the nucleus. It is found in the cytoplasm. It localises to the cytoskeleton. Functionally, plays an important role in the functional organization of mitotic chromosomes. Exhibits low basal ATPase activity, and unable to polymerize. Proposed core component of the chromatin remodeling INO80 complex which is involved in transcriptional regulation, DNA replication and probably DNA repair. Strongly prefer nucleosomes and H3-H4 tetramers over H2A-H2B dimers, suggesting it may act as a nucleosome recognition module within the complex. The polypeptide is Actin-related protein 8 (Dictyostelium discoideum (Social amoeba)).